Here is a 66-residue protein sequence, read N- to C-terminus: Large ribosomal subunit protein bL32 (66 aa).

It belongs to the bacterial ribosomal protein bL32 family.

This Rickettsia canadensis (strain McKiel) protein is Large ribosomal subunit protein bL32.